A 305-amino-acid chain; its full sequence is MIRQRTLKEIVKTTGVGLHSGRKVTLTLRPAAANTGIVYRRTDVNPPVDFPADPASVRDTMLCTALVNDEGVRISTVEHLNAALAGMGIDNIIVEVDAPEIPIMDGSASPFVYLLQQAGVETLNAAKRFIRIKKPIRFEDGDKWAEFVPFNGFRMDFEIEFNHPAIESDEQHLLFDFSSQGFVKEISRARTFGFMRDIEYLQSQNLCLGGSFDCAIVLDEYRILNEEGLRFENEFVTHKVLDAIGDLYMCGHAIIGEFRAYKSGHGLNNQLLRAVLADAEAWEWATFEEEVGSPVAFAEPGMVLA.

The Zn(2+) site is built by H79, H238, and D242. Residue H265 is the Proton donor of the active site.

Belongs to the LpxC family. Requires Zn(2+) as cofactor.

The catalysed reaction is a UDP-3-O-[(3R)-3-hydroxyacyl]-N-acetyl-alpha-D-glucosamine + H2O = a UDP-3-O-[(3R)-3-hydroxyacyl]-alpha-D-glucosamine + acetate. It functions in the pathway glycolipid biosynthesis; lipid IV(A) biosynthesis; lipid IV(A) from (3R)-3-hydroxytetradecanoyl-[acyl-carrier-protein] and UDP-N-acetyl-alpha-D-glucosamine: step 2/6. Its function is as follows. Catalyzes the hydrolysis of UDP-3-O-myristoyl-N-acetylglucosamine to form UDP-3-O-myristoylglucosamine and acetate, the committed step in lipid A biosynthesis. This is UDP-3-O-acyl-N-acetylglucosamine deacetylase from Vibrio atlanticus (strain LGP32) (Vibrio splendidus (strain Mel32)).